Reading from the N-terminus, the 95-residue chain is Aspartyl/glutamyl-tRNA(Asn/Gln) amidotransferase subunit C (95 aa).

This sequence belongs to the GatC family. In terms of assembly, heterotrimer of A, B and C subunits.

It catalyses the reaction L-glutamyl-tRNA(Gln) + L-glutamine + ATP + H2O = L-glutaminyl-tRNA(Gln) + L-glutamate + ADP + phosphate + H(+). The enzyme catalyses L-aspartyl-tRNA(Asn) + L-glutamine + ATP + H2O = L-asparaginyl-tRNA(Asn) + L-glutamate + ADP + phosphate + 2 H(+). Functionally, allows the formation of correctly charged Asn-tRNA(Asn) or Gln-tRNA(Gln) through the transamidation of misacylated Asp-tRNA(Asn) or Glu-tRNA(Gln) in organisms which lack either or both of asparaginyl-tRNA or glutaminyl-tRNA synthetases. The reaction takes place in the presence of glutamine and ATP through an activated phospho-Asp-tRNA(Asn) or phospho-Glu-tRNA(Gln). In Rhodopseudomonas palustris (strain BisA53), this protein is Aspartyl/glutamyl-tRNA(Asn/Gln) amidotransferase subunit C.